Reading from the N-terminus, the 354-residue chain is UPF0283 membrane protein plu2581 (354 aa).

The next 3 membrane-spanning stretches (helical) occupy residues 71–91, 101–121, and 214–234; these read MVYG…VQWI, SALG…GSLV, and ESAL…FIAW.

Belongs to the UPF0283 family.

It localises to the cell inner membrane. The polypeptide is UPF0283 membrane protein plu2581 (Photorhabdus laumondii subsp. laumondii (strain DSM 15139 / CIP 105565 / TT01) (Photorhabdus luminescens subsp. laumondii)).